Here is a 506-residue protein sequence, read N- to C-terminus: Probable alpha-L-arabinofuranosidase B (506 aa).

The first 26 residues, 1–26 (MLLPRGFNRAVVTALGVVGTGTLVAA), serve as a signal peptide directing secretion. The interval 27 to 343 (GPCDIYSSGG…ANIVAAKYAV (317 aa)) is catalytic. 3 disulfide bridges follow: Cys-29–Cys-39, Cys-89–Cys-94, and Cys-184–Cys-185. Asp-227 provides a ligand contact to substrate. The active-site Nucleophile is the Glu-229. Asn-230 lines the substrate pocket. Residue Asn-285 is glycosylated (N-linked (GlcNAc...) asparagine). Substrate is bound at residue Gly-304. Asp-305 (proton donor) is an active-site residue. Positions 344–506 (APLTSGPSLT…VSWVVSTSFA (163 aa)) are ABD. An N-linked (GlcNAc...) asparagine glycan is attached at Asn-375. A disulfide bridge links Cys-409 with Cys-447. Positions 424, 427, 443, 471, 476, and 496 each coordinate substrate.

This sequence belongs to the glycosyl hydrolase 54 family.

It localises to the secreted. It catalyses the reaction Hydrolysis of terminal non-reducing alpha-L-arabinofuranoside residues in alpha-L-arabinosides.. Its pathway is glycan metabolism; L-arabinan degradation. Its function is as follows. Alpha-L-arabinofuranosidase involved in the degradation of arabinoxylan, a major component of plant hemicellulose. Able to hydrolyze 1,5-, 1,3- and 1,2-alpha-linkages not only in L-arabinofuranosyl oligosaccharides, but also in polysaccharides containing terminal non-reducing L-arabinofuranoses in side chains, like L-arabinan, arabinogalactan and arabinoxylan. This is Probable alpha-L-arabinofuranosidase B (abfB) from Aspergillus terreus (strain NIH 2624 / FGSC A1156).